A 232-amino-acid polypeptide reads, in one-letter code: Ribosomal RNA small subunit methyltransferase G (232 aa).

Residues glycine 75, phenylalanine 80, 126–127 (AE), and arginine 143 contribute to the S-adenosyl-L-methionine site.

It belongs to the methyltransferase superfamily. RNA methyltransferase RsmG family.

The protein resides in the cytoplasm. Specifically methylates the N7 position of a guanine in 16S rRNA. The chain is Ribosomal RNA small subunit methyltransferase G from Fusobacterium nucleatum subsp. nucleatum (strain ATCC 25586 / DSM 15643 / BCRC 10681 / CIP 101130 / JCM 8532 / KCTC 2640 / LMG 13131 / VPI 4355).